Consider the following 154-residue polypeptide: MPHPLLPDLETLASATAAGKGYKLCCVQVFTHLIPMTIQVQIRRKDGSDVSLDDCAHFSASMDEALEASQLFTEAYVLEISSPGIGDQLHSDQDFLTFRGFPVEISFRDHDSDLHQAGLLHKRSDEHVHINIKGRIQRIPRKAVTCVRLTNPTG.

It belongs to the RimP family.

It localises to the cytoplasm. Its function is as follows. Required for maturation of 30S ribosomal subunits. The protein is Ribosome maturation factor RimP of Prochlorococcus marinus (strain MIT 9313).